A 423-amino-acid chain; its full sequence is Glucose-1-phosphate adenylyltransferase (423 aa).

Alpha-D-glucose 1-phosphate-binding positions include Y98, G163, 178-179, and S189; that span reads EK.

It belongs to the bacterial/plant glucose-1-phosphate adenylyltransferase family. As to quaternary structure, homotetramer.

It carries out the reaction alpha-D-glucose 1-phosphate + ATP + H(+) = ADP-alpha-D-glucose + diphosphate. It participates in glycan biosynthesis; glycogen biosynthesis. Involved in the biosynthesis of ADP-glucose, a building block required for the elongation reactions to produce glycogen. Catalyzes the reaction between ATP and alpha-D-glucose 1-phosphate (G1P) to produce pyrophosphate and ADP-Glc. The protein is Glucose-1-phosphate adenylyltransferase of Thermotoga neapolitana (strain ATCC 49049 / DSM 4359 / NBRC 107923 / NS-E).